The chain runs to 223 residues: Golgi to ER traffic protein 1 (223 aa).

Position 1 (Met-1) is a topological domain, lumenal. A helical membrane pass occupies residues 2–21 (SWVVAIAVVFVVVLKVLEYS). Residues 22–105 (TSYHDLVLQS…QIKGHLKKVK (84 aa)) are Cytoplasmic-facing. Positions 56-105 (ENKSISAQDNYAKWTKNNRKLDKLDKEITELGAQLKAHNEQIKGHLKKVK) form a coiled coil. The chain crosses the membrane as a helical span at residues 106 to 126 (LLLLTVPFLCFKLWKGKHIVY). The Lumenal portion of the chain corresponds to 127 to 177 (NLPHHQMFPQLVAGVWSQGWLYLAILPLQLAKSIVTGSSFAIETASFPHMG). The chain crosses the membrane as a helical span at residues 178 to 194 (VSLGIWLWALNSVISNI). The Cytoplasmic portion of the chain corresponds to 195–223 (EFMTMQLWAKPVSKPSKKLEIVTDEIKVD).

It belongs to the WRB/GET1 family. Component of the Golgi to ER traffic (GET) complex, which is composed of GET1, GET2 and GET3. Within the complex, GET1 and GET2 form a heterotetramer which is stabilized by phosphatidylinositol binding and which binds to the GET3 homodimer.

The protein resides in the endoplasmic reticulum membrane. The protein localises to the golgi apparatus membrane. Required for the post-translational delivery of tail-anchored (TA) proteins to the endoplasmic reticulum. Together with GET2, acts as a membrane receptor for soluble GET3, which recognizes and selectively binds the transmembrane domain of TA proteins in the cytosol. The GET complex cooperates with the HDEL receptor ERD2 to mediate the ATP-dependent retrieval of resident ER proteins that contain a C-terminal H-D-E-L retention signal from the Golgi to the ER. The polypeptide is Golgi to ER traffic protein 1 (Candida glabrata (strain ATCC 2001 / BCRC 20586 / JCM 3761 / NBRC 0622 / NRRL Y-65 / CBS 138) (Yeast)).